The following is a 314-amino-acid chain: Methionyl-tRNA formyltransferase (314 aa).

Serine 113–proline 116 serves as a coordination point for (6S)-5,6,7,8-tetrahydrofolate.

It belongs to the Fmt family.

It catalyses the reaction L-methionyl-tRNA(fMet) + (6R)-10-formyltetrahydrofolate = N-formyl-L-methionyl-tRNA(fMet) + (6S)-5,6,7,8-tetrahydrofolate + H(+). Functionally, attaches a formyl group to the free amino group of methionyl-tRNA(fMet). The formyl group appears to play a dual role in the initiator identity of N-formylmethionyl-tRNA by promoting its recognition by IF2 and preventing the misappropriation of this tRNA by the elongation apparatus. The chain is Methionyl-tRNA formyltransferase from Pseudomonas aeruginosa (strain LESB58).